We begin with the raw amino-acid sequence, 182 residues long: Putative manganese efflux pump MntP (182 aa).

A run of 6 helical transmembrane segments spans residues 6-26 (LIPL…VSLG), 37-57 (ILYI…IGMV), 71-91 (HFAG…STIL), 101-121 (IGIS…SVGL), 131-151 (IITI…GLLI), and 162-182 (YGEI…LFPI).

Belongs to the MntP (TC 9.B.29) family.

Its subcellular location is the cell membrane. Probably functions as a manganese efflux pump. The sequence is that of Putative manganese efflux pump MntP from Bacillus cereus (strain B4264).